A 97-amino-acid chain; its full sequence is UPF0235 protein DET1292 (97 aa).

Belongs to the UPF0235 family.

This chain is UPF0235 protein DET1292, found in Dehalococcoides mccartyi (strain ATCC BAA-2266 / KCTC 15142 / 195) (Dehalococcoides ethenogenes (strain 195)).